The chain runs to 538 residues: Phosphoenolpyruvate carboxykinase (ATP) (538 aa).

Arginine 64, tyrosine 205, and lysine 211 together coordinate substrate. ATP contacts are provided by residues lysine 211, histidine 230, and 246-254 (GLSGTGKTT). 2 residues coordinate Mn(2+): lysine 211 and histidine 230. Aspartate 267 provides a ligand contact to Mn(2+). ATP contacts are provided by residues glutamate 295, arginine 331, 447–448 (RI), and threonine 453. Residue arginine 331 participates in substrate binding.

It belongs to the phosphoenolpyruvate carboxykinase (ATP) family. In terms of assembly, monomer. It depends on Mn(2+) as a cofactor.

The protein resides in the cytoplasm. The enzyme catalyses oxaloacetate + ATP = phosphoenolpyruvate + ADP + CO2. It participates in carbohydrate biosynthesis; gluconeogenesis. Its function is as follows. Involved in the gluconeogenesis. Catalyzes the conversion of oxaloacetate (OAA) to phosphoenolpyruvate (PEP) through direct phosphoryl transfer between the nucleoside triphosphate and OAA. In Histophilus somni (strain 129Pt) (Haemophilus somnus), this protein is Phosphoenolpyruvate carboxykinase (ATP).